The sequence spans 96 residues: Putative membrane protein insertion efficiency factor (96 aa).

A disordered region spans residues 68 to 96 (DPVPEHFPARHPRPQGSPPTDHPPTDQPS). Positions 82 to 96 (QGSPPTDHPPTDQPS) are enriched in pro residues.

The protein belongs to the UPF0161 family.

It is found in the cell membrane. Could be involved in insertion of integral membrane proteins into the membrane. The protein is Putative membrane protein insertion efficiency factor of Deinococcus radiodurans (strain ATCC 13939 / DSM 20539 / JCM 16871 / CCUG 27074 / LMG 4051 / NBRC 15346 / NCIMB 9279 / VKM B-1422 / R1).